The primary structure comprises 585 residues: 1-deoxy-D-xylulose-5-phosphate synthase (585 aa).

Thiamine diphosphate contacts are provided by residues histidine 80 and 121–123; that span reads GHS. Aspartate 152 is a Mg(2+) binding site. Residues 153-154, asparagine 181, tyrosine 259, and glutamate 334 contribute to the thiamine diphosphate site; that span reads GS. Asparagine 181 serves as a coordination point for Mg(2+).

It belongs to the transketolase family. DXPS subfamily. Homodimer. Mg(2+) serves as cofactor. It depends on thiamine diphosphate as a cofactor.

It catalyses the reaction D-glyceraldehyde 3-phosphate + pyruvate + H(+) = 1-deoxy-D-xylulose 5-phosphate + CO2. The protein operates within metabolic intermediate biosynthesis; 1-deoxy-D-xylulose 5-phosphate biosynthesis; 1-deoxy-D-xylulose 5-phosphate from D-glyceraldehyde 3-phosphate and pyruvate: step 1/1. Functionally, catalyzes the acyloin condensation reaction between C atoms 2 and 3 of pyruvate and glyceraldehyde 3-phosphate to yield 1-deoxy-D-xylulose-5-phosphate (DXP). The polypeptide is 1-deoxy-D-xylulose-5-phosphate synthase (Buchnera aphidicola subsp. Schizaphis graminum (strain Sg)).